Reading from the N-terminus, the 186-residue chain is Hydra actinoporin-like toxin 5 (186 aa).

An N-terminal signal peptide occupies residues 1–20 (MLLYVCLVNLLLQSPSGVDS). The Cell attachment site motif lies at 158–160 (RDG).

It belongs to the actinoporin family. HALT subfamily. Octamer or nonamer in membranes. Monomer in the soluble state. In vitro, interacts with folate receptor alpha (of target organism).

Its subcellular location is the nematocyst. It is found in the secreted. It localises to the target cell membrane. In terms of biological role, pore-forming protein that forms hydrophilic pores and causes cytolysis. Compared to equinatoxin-2 (AC P61914), it reveals lower cytolysis activity (5-12-fold difference, tested on erythrocytes), a larger pore size (probably 2-3 nm) and different affinity to membrane lipids (100-fold lower affinity to sphingomyelin). Binds to sulfatides (SFT) as well as to the two sphingolipids, lysophosphatidic acid (LPA) and sphingosine-1-phosphate (S1P). It seems to bind more strongly to LPA than to S1P and SFT. Shows cytolytic activity on HeLa cells, with a different potency than its paralogs (from most potent to less potent: HALT-4&gt;HALT-6~HALT-1&gt;HALT-3&gt;HALT-7&gt;HALT-2). Pore formation is a multi-step process that involves specific recognition of membrane lipid by a protein aromatic residues rich region, firm binding to the membrane (mainly driven by hydrophobic interactions) accompanied by the transfer of the N-terminal region to the lipid-water interface and finally pore formation after oligomerization of monomers. In vitro, binds to the folate receptor alpha (FOLR1), a GPI-anchored membrane protein that plays a major role in the uptake of folate/folic acid into cells via endocytosis, suggesting a possible involvement of this receptor in the mechanism of HALT-1-induced cell lysis. In vivo, does not cause visible paralysis in larvae of the blowfly Sarcophaga faculata, the most common arthropod prey of Hydra. This is Hydra actinoporin-like toxin 5 from Hydra vulgaris (Hydra).